The chain runs to 185 residues: CASP-like protein 5A1 (185 aa).

The Cytoplasmic segment spans residues 1-48 (MNVSHPAVHPVGVPPALGGQAVPPRMRMRVRMEYLVFQGMPLPGSLGG). Residues 49 to 69 (LMLRLGQFCSALIAFSVMVSI) form a helical membrane-spanning segment. Residues 70 to 76 (RDFSVTA) are Extracellular-facing. Residues 77–97 (FCYLLAATVLQCLWSLALAVI) form a helical membrane-spanning segment. Topologically, residues 98 to 121 (DVYALLVKRSLRNPLLVSIFVVGD) are cytoplasmic. Residues 122–142 (GVTATLTFAAACASAGVVVLI) traverse the membrane as a helical segment. Over 143–160 (GNDISMCKSNPCANYEAA) the chain is Extracellular. A helical transmembrane segment spans residues 161-181 (IIMAFLSWFMVSISFVLTFWM). The Cytoplasmic segment spans residues 182–185 (LATL).

Belongs to the Casparian strip membrane proteins (CASP) family. As to quaternary structure, homodimer and heterodimers.

The protein localises to the cell membrane. In Pinus contorta (Shore pine), this protein is CASP-like protein 5A1.